Here is a 507-residue protein sequence, read N- to C-terminus: uncharacterized protein (507 aa).

Residues 1–12 (MEKSISSISKAS) are compositionally biased toward low complexity. The segment at 1–20 (MEKSISSISKASMNSDEKLD) is disordered. Helical transmembrane passes span 57–74 (FDFRILPLLALLYLFNAL), 100–120 (IMISIFYIPFVLCAFPFSYLY), 126–146 (ARILPFFMLSFGAMSLCQAAV), 157–177 (WFLGMAESAVLPGVVYYLTTF), 189–209 (IFYAAANVSSAFGGLLAYGVF), 221–241 (YLFLIEGGVTFLCAIVIFLVL), 283–303 (VFKHPIAILWLLEEMALGVPL), 326–346 (LMTVAPAISGAIWLLVFAFIS), 353–373 (GIVLIAAISTTMIGFIVYGSI), 379–399 (IGVSYFACFLMTAGAAASSVL), 416–436 (VFTSVGVPLANVMGLVSANIF), and 445–465 (VPALGITAGFGGLGILLVASI).

Belongs to the major facilitator superfamily. Allantoate permease family.

It localises to the endoplasmic reticulum. Its subcellular location is the membrane. This is an uncharacterized protein from Schizosaccharomyces pombe (strain 972 / ATCC 24843) (Fission yeast).